Here is a 295-residue protein sequence, read N- to C-terminus: Putative aquaporin-12B (295 aa).

Residues Met1 to Arg22 are Cytoplasmic-facing. The helical transmembrane segment at Arg23–Ala41 threads the bilayer. Over Met42 to Phe55 the chain is Extracellular. The helical transmembrane segment at Gly56 to Thr74 threads the bilayer. The Cytoplasmic segment spans residues Leu75–Asp76. An intramembrane region (discontinuously helical) is located at residues Gly77–Cys114. Positions Asn81–Thr83 match the NPA 1 motif. The Cytoplasmic segment spans residues Thr115 to Cys120. Residues Trp121 to Ala142 form a helical membrane-spanning segment. The Extracellular portion of the chain corresponds to Leu143–Thr145. The helical transmembrane segment at Ser146–Leu166 threads the bilayer. Topologically, residues His167–Ala174 are cytoplasmic. The chain crosses the membrane as a helical span at residues Tyr175–Ala191. Residues Gly192–Phe194 are Extracellular-facing. Positions Thr195 to Ser206 form an intramembrane region, discontinuously helical. An NPA 2 motif is present at residues Asn200–Ala202. Residues Val207–Tyr223 are Extracellular-facing. A helical transmembrane segment spans residues Trp224 to His244. Over Leu245–Ser295 the chain is Cytoplasmic. The disordered stretch occupies residues Lys257–Ser295.

It belongs to the MIP/aquaporin (TC 1.A.8) family. AQP11/AQP12 subfamily. Homotetramer; each monomer provides an independent water pore.

The protein resides in the membrane. The catalysed reaction is H2O(in) = H2O(out). Its function is as follows. Putative aquaporin. Could form homotetrameric transmembrane channels, with each monomer independently mediating water transport across the plasma membrane along its osmotic gradient. The sequence is that of Putative aquaporin-12B from Homo sapiens (Human).